Reading from the N-terminus, the 857-residue chain is Elongation factor 2 (857 aa).

The tr-type G domain occupies 17 to 362 (ANIRNMSVIA…MITIHLPSPV (346 aa)). Position 26 to 33 (26 to 33 (AHVDHGKS)) interacts with GTP. A phosphothreonine mark is found at Thr-54, Thr-57, and Thr-59. Position 152 is an N6-succinyllysine (Lys-152). GTP contacts are provided by residues 158–161 (NKMD) and 216–218 (SGL). Lys-235 is modified (N6-acetyllysine). N6-acetyllysine; alternate is present on Lys-239. Lys-239 participates in a covalent cross-link: Glycyl lysine isopeptide (Lys-Gly) (interchain with G-Cter in SUMO1); alternate. The residue at position 265 (Tyr-265) is a Phosphotyrosine. Lys-272 carries the post-translational modification N6-acetyllysine; alternate. At Lys-272 the chain carries N6-succinyllysine; alternate. Position 275 is an N6-acetyllysine (Lys-275). Lys-322 is covalently cross-linked (Glycyl lysine isopeptide (Lys-Gly) (interchain with G-Cter in SUMO)). A Phosphoserine modification is found at Ser-325. Phosphotyrosine is present on Tyr-373. Residue Thr-435 is modified to Phosphothreonine. N6-acetyllysine occurs at positions 439 and 445. Ser-502 carries the phosphoserine modification. At Lys-525 the chain carries N6,N6,N6-trimethyllysine. Lys-529 participates in a covalent cross-link: Glycyl lysine isopeptide (Lys-Gly) (interchain with G-Cter in SUMO). Lys-572 is subject to N6-succinyllysine. Position 595 is a phosphoserine (Ser-595). Lys-619 is subject to N6-acetyllysine. His-715 carries the post-translational modification Diphthamide.

This sequence belongs to the GTP-binding elongation factor family. EF-G/EF-2 subfamily. As to quaternary structure, binds to 80S ribosomes. Actively translating ribosomes show mutually exclusive binding of eIF5a (EIF5A or EIF5A2) and EEF2/eEF2. Interacts with SERBP1; interaction sequesters EEF2/eEF2 at the A-site of the ribosome, thereby blocking the interaction sites of the mRNA-tRNA complex, promoting ribosome stabilization and hibernation. Interacts with HABP4; interaction takes place at the A-site of hibernating ribosomes and promotes ribosome stabilization. Component of the mRNA surveillance SURF complex, at least composed of ERF1, ERF3 (ERF3A or ERF3B), EEF2, UPF1/RENT1, SMG1, SMG8 and SMG9. Interacts with RBPMS2. In terms of processing, phosphorylation by EF-2 kinase completely inactivates EF-2; it requires prior phosphorylation by CDK2 at Ser-595 during mitotic prometaphase. Phosphorylation by CSK promotes SUMOylation, proteolytic cleavage, and nuclear translocation if the C-terminal fragment. Diphthamide is 2-[3-carboxyamido-3-(trimethyl-ammonio)propyl]histidine. Post-translationally, ISGylated. In terms of processing, proteolytically processed at two sites following phosphorylation by CSK. SUMOylated following phosphorylation by CSK, promotes proteolytic cleavage.

Its subcellular location is the cytoplasm. It is found in the nucleus. The enzyme catalyses GTP + H2O = GDP + phosphate + H(+). Functionally, catalyzes the GTP-dependent ribosomal translocation step during translation elongation. During this step, the ribosome changes from the pre-translocational (PRE) to the post-translocational (POST) state as the newly formed A-site-bound peptidyl-tRNA and P-site-bound deacylated tRNA move to the P and E sites, respectively. Catalyzes the coordinated movement of the two tRNA molecules, the mRNA and conformational changes in the ribosome. In Oryctolagus cuniculus (Rabbit), this protein is Elongation factor 2 (EEF2).